Here is a 275-residue protein sequence, read N- to C-terminus: 2,3,4,5-tetrahydropyridine-2,6-dicarboxylate N-succinyltransferase (275 aa).

Substrate-binding residues include Arg104 and Asp141.

Belongs to the transferase hexapeptide repeat family. Homotrimer.

The protein localises to the cytoplasm. It catalyses the reaction (S)-2,3,4,5-tetrahydrodipicolinate + succinyl-CoA + H2O = (S)-2-succinylamino-6-oxoheptanedioate + CoA. It functions in the pathway amino-acid biosynthesis; L-lysine biosynthesis via DAP pathway; LL-2,6-diaminopimelate from (S)-tetrahydrodipicolinate (succinylase route): step 1/3. The sequence is that of 2,3,4,5-tetrahydropyridine-2,6-dicarboxylate N-succinyltransferase from Mannheimia succiniciproducens (strain KCTC 0769BP / MBEL55E).